The primary structure comprises 149 residues: 3-dehydroquinate dehydratase (149 aa).

Catalysis depends on Y26, which acts as the Proton acceptor. Substrate-binding residues include N77, H83, and D90. The active-site Proton donor is H103. Residues 104-105 and R114 contribute to the substrate site; that span reads LS.

It belongs to the type-II 3-dehydroquinase family. As to quaternary structure, homododecamer.

The enzyme catalyses 3-dehydroquinate = 3-dehydroshikimate + H2O. It functions in the pathway metabolic intermediate biosynthesis; chorismate biosynthesis; chorismate from D-erythrose 4-phosphate and phosphoenolpyruvate: step 3/7. Catalyzes a trans-dehydration via an enolate intermediate. In Psychromonas ingrahamii (strain DSM 17664 / CCUG 51855 / 37), this protein is 3-dehydroquinate dehydratase.